The following is a 446-amino-acid chain: Nuclear envelope morphology protein 1 (446 aa).

The disordered stretch occupies residues 53-80; that stretch reads VDQQYDHSSSHLKESDQNQERKNSVPKK. A compositionally biased stretch (basic and acidic residues) spans 56-75; that stretch reads QYDHSSSHLKESDQNQERKN. A helical membrane pass occupies residues 87–103; sequence ILIEKIASILWALLLFL. Residues 132-168 are disordered; that stretch reads HTDKRNRGSNASENELPVSSSNINDSSEKTNPKNCNL. The span at 139-156 shows a compositional bias: polar residues; the sequence is GSNASENELPVSSSNIND. One can recognise an FCP1 homology domain in the interval 247 to 424; sequence NTQKKKKLVI…LNLLPFLEAM (178 aa).

It belongs to the Dullard family. As to quaternary structure, component of the NEM1-SPO7 complex.

Its subcellular location is the endoplasmic reticulum membrane. The protein localises to the nucleus membrane. The catalysed reaction is O-phospho-L-seryl-[protein] + H2O = L-seryl-[protein] + phosphate. The enzyme catalyses O-phospho-L-threonyl-[protein] + H2O = L-threonyl-[protein] + phosphate. In terms of biological role, catalytic component of the NEM1-SPO7 complex which acts as a phosphatase and dephosphorylates the phosphatidic acid phosphohydrolase PAH1. Essential for the formation of a spherical nucleus and meiotic division. The NEM1-SPOo7 protein phosphatase is required for efficient mitophagy under prolonged respiration, as well as for reticulophagy and pexophagy. The polypeptide is Nuclear envelope morphology protein 1 (NEM1) (Saccharomyces cerevisiae (strain ATCC 204508 / S288c) (Baker's yeast)).